The sequence spans 180 residues: Large ribosomal subunit protein uL5 (180 aa).

The protein belongs to the universal ribosomal protein uL5 family. As to quaternary structure, part of the 50S ribosomal subunit; part of the 5S rRNA/L5/L18/L25 subcomplex. Contacts the 5S rRNA and the P site tRNA. Forms a bridge to the 30S subunit in the 70S ribosome.

Functionally, this is one of the proteins that bind and probably mediate the attachment of the 5S RNA into the large ribosomal subunit, where it forms part of the central protuberance. In the 70S ribosome it contacts protein S13 of the 30S subunit (bridge B1b), connecting the 2 subunits; this bridge is implicated in subunit movement. Contacts the P site tRNA; the 5S rRNA and some of its associated proteins might help stabilize positioning of ribosome-bound tRNAs. This chain is Large ribosomal subunit protein uL5, found in Lactobacillus delbrueckii subsp. bulgaricus (strain ATCC 11842 / DSM 20081 / BCRC 10696 / JCM 1002 / NBRC 13953 / NCIMB 11778 / NCTC 12712 / WDCM 00102 / Lb 14).